The following is a 784-amino-acid chain: LPS-assembly protein LptD (784 aa).

The N-terminal stretch at 1-24 is a signal peptide; it reads MKKRIPTLLATMIATALYSQQGLA. Disulfide bonds link Cys-31–Cys-724 and Cys-173–Cys-725.

This sequence belongs to the LptD family. Component of the lipopolysaccharide transport and assembly complex. Interacts with LptE and LptA. Post-translationally, contains two intramolecular disulfide bonds.

The protein resides in the cell outer membrane. In terms of biological role, together with LptE, is involved in the assembly of lipopolysaccharide (LPS) at the surface of the outer membrane. The sequence is that of LPS-assembly protein LptD from Escherichia coli O157:H7.